Reading from the N-terminus, the 459-residue chain is Exodeoxyribonuclease 7 large subunit (459 aa).

It belongs to the XseA family. Heterooligomer composed of large and small subunits.

It is found in the cytoplasm. The catalysed reaction is Exonucleolytic cleavage in either 5'- to 3'- or 3'- to 5'-direction to yield nucleoside 5'-phosphates.. In terms of biological role, bidirectionally degrades single-stranded DNA into large acid-insoluble oligonucleotides, which are then degraded further into small acid-soluble oligonucleotides. In Pseudomonas entomophila (strain L48), this protein is Exodeoxyribonuclease 7 large subunit.